Here is a 473-residue protein sequence, read N- to C-terminus: Aspartyl/glutamyl-tRNA(Asn/Gln) amidotransferase subunit B (473 aa).

It belongs to the GatB/GatE family. GatB subfamily. As to quaternary structure, heterotrimer of A, B and C subunits.

It carries out the reaction L-glutamyl-tRNA(Gln) + L-glutamine + ATP + H2O = L-glutaminyl-tRNA(Gln) + L-glutamate + ADP + phosphate + H(+). The enzyme catalyses L-aspartyl-tRNA(Asn) + L-glutamine + ATP + H2O = L-asparaginyl-tRNA(Asn) + L-glutamate + ADP + phosphate + 2 H(+). Functionally, allows the formation of correctly charged Asn-tRNA(Asn) or Gln-tRNA(Gln) through the transamidation of misacylated Asp-tRNA(Asn) or Glu-tRNA(Gln) in organisms which lack either or both of asparaginyl-tRNA or glutaminyl-tRNA synthetases. The reaction takes place in the presence of glutamine and ATP through an activated phospho-Asp-tRNA(Asn) or phospho-Glu-tRNA(Gln). This is Aspartyl/glutamyl-tRNA(Asn/Gln) amidotransferase subunit B from Wolbachia sp. subsp. Drosophila simulans (strain wRi).